A 391-amino-acid chain; its full sequence is Odorant receptor 67d (391 aa).

At 1-45 (MLKMAKVEPVERYCKVIRMIRFCVGFCGNDVADPNFRMWWLTYAV) the chain is on the cytoplasmic side. Residues 46 to 66 (MAAIAFFFACTGYTIYVGVVI) traverse the membrane as a helical segment. Residues 67–71 (NGDLT) lie on the Extracellular side of the membrane. Residues 72–92 (IILQALAMVGSAVQGLTKLLV) traverse the membrane as a helical segment. Topologically, residues 93–140 (TANNASHMREVQNTYEDIYREYGSKGDEYAKCLEKRIRITWTLLIGFM) are cytoplasmic. Residues 141 to 161 (LVYIILLGLVITFPIFYLLIL) traverse the membrane as a helical segment. Residues 162-164 (HQK) lie on the Extracellular side of the membrane. A helical transmembrane segment spans residues 165–185 (VLVMQFLIPFLDHTTDGGHLI). Residues 186-191 (LTAAHV) are Cytoplasmic-facing. A helical membrane pass occupies residues 192-212 (ILITFGGFGNYGGDMYLFLFV). Residues 213–268 (THVPLIKDIFCVKLTEFNELVMKRNDFPKVRAMLCDLLVWHQLYTRMLQTTKKIYS) are Extracellular-facing. Residues 269 to 289 (IVLFVQLSTTCVGLLCTISCI) form a helical membrane-spanning segment. Over 290–297 (FMKAWPAA) the chain is Cytoplasmic. Residues 298 to 318 (PLYLLYAAITLYTFCGLGTLV) form a helical membrane-spanning segment. Over 319–391 (ENSNEDFLSV…FSMMLMNYLG (73 aa)) the chain is Extracellular.

Belongs to the insect chemoreceptor superfamily. Heteromeric odorant receptor channel (TC 1.A.69) family. Or67d subfamily. As to quaternary structure, interacts with Orco. Complexes exist early in the endomembrane system in olfactory sensory neurons (OSNs), coupling these complexes to the conserved ciliary trafficking pathway. In terms of tissue distribution, expressed in antenna.

It localises to the cell membrane. Its function is as follows. Plays a role in detection and sensitivity to pheromones and signal transduction of the fatty-acid-derived male pheromone 11-cis vaccenyl acetate (cVA). Acts in concert with Snmp and lush to capture cVA molecules on the surface of Or67d expressing olfactory dendrites and facilitate their transfer to the odorant-receptor Orco complex. Necessary to mediate behavioral responses to cVA by regulating both male and female mating behavior. Activation of Or67d neurons by cVA inhibits courtship of other males, whereas in females their activation promotes receptivity to other males. May form a complex with Orco to form odorant-sensing units, providing sensitive and prolonged odorant signaling and calcium permeability. The sequence is that of Odorant receptor 67d (Or67d) from Drosophila melanogaster (Fruit fly).